The primary structure comprises 731 residues: Inducible ornithine decarboxylase (731 aa).

K356 carries the N6-(pyridoxal phosphate)lysine modification.

Belongs to the Orn/Lys/Arg decarboxylase class-I family. In terms of assembly, dodecamer. Pyridoxal 5'-phosphate serves as cofactor.

It carries out the reaction L-ornithine + H(+) = putrescine + CO2. This Lactobacillus sp. (strain 30a) protein is Inducible ornithine decarboxylase (odcI).